The sequence spans 348 residues: Probable dual-specificity RNA methyltransferase RlmN (348 aa).

The active-site Proton acceptor is Glu-93. The Radical SAM core domain occupies 99 to 323 (TEKRLTACLS…QTRLSNSGIN (225 aa)). Cys-106 and Cys-338 are disulfide-bonded. [4Fe-4S] cluster-binding residues include Cys-113, Cys-117, and Cys-120. S-adenosyl-L-methionine contacts are provided by residues 160–161 (GE), Ser-190, 219–221 (SLH), and Asn-295. Cys-338 acts as the S-methylcysteine intermediate in catalysis.

It belongs to the radical SAM superfamily. RlmN family. The cofactor is [4Fe-4S] cluster.

It is found in the cytoplasm. The enzyme catalyses adenosine(2503) in 23S rRNA + 2 reduced [2Fe-2S]-[ferredoxin] + 2 S-adenosyl-L-methionine = 2-methyladenosine(2503) in 23S rRNA + 5'-deoxyadenosine + L-methionine + 2 oxidized [2Fe-2S]-[ferredoxin] + S-adenosyl-L-homocysteine. It carries out the reaction adenosine(37) in tRNA + 2 reduced [2Fe-2S]-[ferredoxin] + 2 S-adenosyl-L-methionine = 2-methyladenosine(37) in tRNA + 5'-deoxyadenosine + L-methionine + 2 oxidized [2Fe-2S]-[ferredoxin] + S-adenosyl-L-homocysteine. Its function is as follows. Specifically methylates position 2 of adenine 2503 in 23S rRNA and position 2 of adenine 37 in tRNAs. This chain is Probable dual-specificity RNA methyltransferase RlmN, found in Prochlorococcus marinus subsp. pastoris (strain CCMP1986 / NIES-2087 / MED4).